Consider the following 394-residue polypeptide: RAB6A-GEF complex partner protein 2 (394 aa).

The protein belongs to the RGP1 family. In terms of assembly, forms a complex with RIC1; the interaction enhances RAB6A GTPase activity. Interacts with RIC1. Interacts with RAB6A; the interaction is direct with a preference for RAB6A-GDP. Interacts with RAB33B.

The protein localises to the cytoplasm. Its subcellular location is the cytosol. It is found in the membrane. In terms of biological role, the RIC1-RGP1 complex acts as a guanine nucleotide exchange factor (GEF), which activates RAB6A by exchanging bound GDP for free GTP and may thereby required for efficient fusion of endosome-derived vesicles with the Golgi compartment. The RIC1-RGP1 complex participates in the recycling of mannose-6-phosphate receptors. The chain is RAB6A-GEF complex partner protein 2 from Bos taurus (Bovine).